The sequence spans 62 residues: Andropin (62 aa).

An N-terminal signal peptide occupies residues M1–A22.

The protein belongs to the andropin family. In terms of tissue distribution, ejaculatory duct of adult males.

The protein resides in the secreted. Its function is as follows. Male-specific peptide with moderate activity against Gram-positive bacteria. The sequence is that of Andropin (Anp) from Drosophila teissieri (Fruit fly).